Here is a 309-residue protein sequence, read N- to C-terminus: Porphobilinogen deaminase (309 aa).

S-(dipyrrolylmethanemethyl)cysteine is present on cysteine 240.

Belongs to the HMBS family. In terms of assembly, monomer. Requires dipyrromethane as cofactor.

The enzyme catalyses 4 porphobilinogen + H2O = hydroxymethylbilane + 4 NH4(+). It functions in the pathway porphyrin-containing compound metabolism; protoporphyrin-IX biosynthesis; coproporphyrinogen-III from 5-aminolevulinate: step 2/4. Tetrapolymerization of the monopyrrole PBG into the hydroxymethylbilane pre-uroporphyrinogen in several discrete steps. The chain is Porphobilinogen deaminase from Lawsonia intracellularis (strain PHE/MN1-00).